The chain runs to 765 residues: Putative ankyrin repeat protein L371 (765 aa).

ANK repeat units follow at residues 60–89 (NGNY…RLDV), 93–122 (EGNS…KIIG), 132–161 (KGSV…NANY), 165–194 (DNVN…NLNA), 198–227 (QGST…DQNI), 232–261 (LDFY…NPNH), 265–295 (EGNT…RCRS), 322–353 (DGLT…NLNY), and 357–395 (TGNT…GKTV).

This chain is Putative ankyrin repeat protein L371, found in Acanthamoeba polyphaga mimivirus (APMV).